Here is a 381-residue protein sequence, read N- to C-terminus: Cobalt-precorrin-5B C(1)-methyltransferase (381 aa).

The protein belongs to the CbiD family.

It catalyses the reaction Co-precorrin-5B + S-adenosyl-L-methionine = Co-precorrin-6A + S-adenosyl-L-homocysteine. It functions in the pathway cofactor biosynthesis; adenosylcobalamin biosynthesis; cob(II)yrinate a,c-diamide from sirohydrochlorin (anaerobic route): step 6/10. Catalyzes the methylation of C-1 in cobalt-precorrin-5B to form cobalt-precorrin-6A. In Prochlorococcus marinus (strain SARG / CCMP1375 / SS120), this protein is Cobalt-precorrin-5B C(1)-methyltransferase.